Consider the following 1024-residue polypeptide: Zn(2)-C6 fungal-type transcription factor FTF1a (1024 aa).

The segment at residues 137–164 (CIACRRKKVRCSGEKPACKHCLHSHIPC) is a DNA-binding region (zn(2)-C6 fungal-type).

The protein localises to the nucleus. Functionally, zn(2)-C6 fungal-type transcription factor that has a role in the establishment of the fungus within the plant and/or the progress of the disease. Regulates the expression of virulence factors such as SIX1 and SIX6. The chain is Zn(2)-C6 fungal-type transcription factor FTF1a from Fusarium oxysporum f. sp. lycopersici (strain 4287 / CBS 123668 / FGSC 9935 / NRRL 34936) (Fusarium vascular wilt of tomato).